Consider the following 334-residue polypeptide: Ornithine carbamoyltransferase (334 aa).

Carbamoyl phosphate contacts are provided by residues 57 to 60 (STRT), Gln-84, Arg-108, and 135 to 138 (HPTQ). L-ornithine-binding positions include Asn-169, Asp-233, and 237 to 238 (SM). Carbamoyl phosphate contacts are provided by residues 275 to 276 (CL) and Arg-320.

Belongs to the aspartate/ornithine carbamoyltransferase superfamily. OTCase family.

The protein resides in the cytoplasm. It catalyses the reaction carbamoyl phosphate + L-ornithine = L-citrulline + phosphate + H(+). Its pathway is amino-acid biosynthesis; L-arginine biosynthesis; L-arginine from L-ornithine and carbamoyl phosphate: step 1/3. Functionally, reversibly catalyzes the transfer of the carbamoyl group from carbamoyl phosphate (CP) to the N(epsilon) atom of ornithine (ORN) to produce L-citrulline. The protein is Ornithine carbamoyltransferase of Aeromonas salmonicida (strain A449).